Here is a 585-residue protein sequence, read N- to C-terminus: Parathyroid hormone/parathyroid hormone-related peptide receptor (585 aa).

The N-terminal stretch at 1–26 (MGAARIAPGLALLLCCPVLSSAYALV) is a signal peptide. Over 27–184 (DADDVMTKEE…REREVFDRLG (158 aa)) the chain is Extracellular. 3 disulfides stabilise this stretch: cysteine 48/cysteine 113, cysteine 104/cysteine 144, and cysteine 127/cysteine 166. The segment at 66–100 (DKGWASAPTSGKPRKEKASGKLYPESGEDTGSRHQ) is disordered. 4 N-linked (GlcNAc...) asparagine glycosylation sites follow: asparagine 147, asparagine 157, asparagine 162, and asparagine 172. Residues 185 to 208 (MIYTVGYSVSLASLTVAVLILAYF) form a helical membrane-spanning segment. The Cytoplasmic segment spans residues 209–215 (RRLHCTR). The chain crosses the membrane as a helical span at residues 216–235 (NYIHMHLFLSFMLRAVSIFV). Over 236–277 (KDAVLYSGATLDEAERLTEEELRAIAQAPLPPVAATSYVGCR) the chain is Extracellular. The helical transmembrane segment at 278-301 (VAVTFFLYFLATNYYWILVEGLYL) threads the bilayer. The Cytoplasmic portion of the chain corresponds to 302 to 315 (HSLIFMAFFSEKKY). A helical transmembrane segment spans residues 316–337 (LWGFTVFGWGLPAIFVAVWVSV). Residues 338-356 (RATLANTGCWDLSSGNKKW) lie on the Extracellular side of the membrane. Residues 357 to 377 (IIQVPILASIVLNFILFINIV) traverse the membrane as a helical segment. The Cytoplasmic portion of the chain corresponds to 378–404 (RVLATKLRETNAGRCDTRQQYRKLLKS). A helical transmembrane segment spans residues 405–423 (TLVLMPLFGVHYIVFMATP). Residues 424–435 (YTEVSGTLWQVQ) are Extracellular-facing. Residues 436–458 (MHYEMLFNSFQGFFVAIIYCFCN) form a helical membrane-spanning segment. Residues 459–585 (GEVQAEIKKS…LLQEEWETVM (127 aa)) are Cytoplasmic-facing. Residues 469–472 (WSRW) carry the Important for interaction with G proteins motif. Threonine 543 is subject to Phosphothreonine.

The protein belongs to the G-protein coupled receptor 2 family. As to quaternary structure, homodimer in the absence of bound ligand. Peptide hormone binding leads to dissociation of the homodimer. N-glycosylated.

The protein resides in the cell membrane. In terms of biological role, G-protein-coupled receptor for parathyroid hormone (PTH) and for parathyroid hormone-related peptide (PTHLH). Ligand binding causes a conformation change that triggers signaling via guanine nucleotide-binding proteins (G proteins) and modulates the activity of downstream effectors, such as adenylate cyclase (cAMP). PTH1R is coupled to G(s) G alpha proteins and mediates activation of adenylate cyclase activity. PTHLH dissociates from PTH1R more rapidly than PTH; as consequence, the cAMP response induced by PTHLH decays faster than the response induced by PTH. The chain is Parathyroid hormone/parathyroid hormone-related peptide receptor (PTH1R) from Sus scrofa (Pig).